Reading from the N-terminus, the 419-residue chain is Inward rectifier potassium channel 16 (419 aa).

Topologically, residues 1–67 are cytoplasmic; sequence MSYYGSSYRI…MVDIFTTLVD (67 aa). A helical membrane pass occupies residues 68–94; sequence TKWRHMFVIFSLSYILSWLIFGSIFWL. Residues 95-117 lie on the Extracellular side of the membrane; the sequence is IAFHHGDLLSDPDITPCVDNVHS. Residues 118–134 constitute an intramembrane region (helical; Pore-forming); that stretch reads FTAAFLFSLETQTTIGY. The Selectivity filter motif lies at 131–136; it reads TIGYGY. Residues 135–143 lie on the Extracellular side of the membrane; the sequence is GYRCVTEEC. Residues 144–171 traverse the membrane as a helical segment; it reads SVAVLTVILQSILSCIINTFIIGAALAK. At 172 to 419 the chain is on the cytoplasmic side; the sequence is MATARKRAQT…LNRISMESQM (248 aa). 3 positions are modified to phosphoserine: Ser358, Ser374, and Ser376.

Belongs to the inward rectifier-type potassium channel (TC 1.A.2.1) family. KCNJ16 subfamily. In terms of assembly, it forms heteromeric channels with Kir4.1/KCNJ10; this interaction is required for KCNJ16 localization to the basolateral membrane in kidney cells. As a heteromer with KCNJ10, may interact with MAGI1; this interaction may facilitate KCNJ10/KCNJ16 potassium channel expression at the basolateral membrane in kidney cells. May form heteromers with Kir2.1/KCNJ2. Can form heteromeric channels with Kir4.2/KCNJ15. Abundantly expressed in the proximal and distal segments of the nephron.

It is found in the membrane. Its subcellular location is the basolateral cell membrane. The catalysed reaction is K(+)(in) = K(+)(out). Its activity is regulated as follows. Channel activity is strongly regulated by variations of cytosolic pH; channels are activated by alkaline and inhibited by acidic pH values. Activated by phosphatidylinositol 4,5 biphosphate (PtdIns(4,5)P2). In terms of biological role, inward rectifier potassium channels are characterized by a greater tendency to allow potassium to flow into the cell rather than out of it. Their voltage dependence is regulated by the concentration of extracellular potassium; as external potassium is raised, the voltage range of the channel opening shifts to more positive voltages. The inward rectification is mainly due to the blockage of outward current by internal magnesium. KCNJ16 may be involved in the regulation of fluid and pH balance. In the kidney, together with KCNJ10, mediates basolateral K(+) recycling in distal tubules; this process is critical for Na(+) reabsorption at the tubules. In Mus musculus (Mouse), this protein is Inward rectifier potassium channel 16 (Kcnj16).